The chain runs to 180 residues: MLKLLSEIGPVIAFFAGFFYGGGIQHATLYMLITSVICITLCYVIDKKVSKLSIISTTVLLVSGSITLISGNSMYIKIKPTILYVIFGIIFLMSGIRKNPFIKYALESIVRLKEESWITLSYRTAAFFFFMAVVNEVVWRNFSDETWVKFKVFGVIPITVIFILLQLPLLLKNKLPDSKI.

The next 6 membrane-spanning stretches (helical) occupy residues 4–24 (LLSEIGPVIAFFAGFFYGGGI), 25–45 (QHATLYMLITSVICITLCYVI), 52–72 (LSIISTTVLLVSGSITLISGN), 76–96 (IKIKPTILYVIFGIIFLMSGI), 118–138 (ITLSYRTAAFFFFMAVVNEVV), and 150–170 (FKVFGVIPITVIFILLQLPLL).

This sequence belongs to the YciB family.

It localises to the cell inner membrane. In terms of biological role, plays a role in cell envelope biogenesis, maintenance of cell envelope integrity and membrane homeostasis. The protein is Inner membrane-spanning protein YciB of Rickettsia massiliae (strain Mtu5).